The primary structure comprises 718 residues: Gephyrin (718 aa).

Residues 1–19 are compositionally biased toward polar residues; sequence MSNTLTTERNITNSPTAAQ. The interval 1–26 is disordered; sequence MSNTLTTERNITNSPTAAQLNEKESG. Residues 31-176 form an MPT Mo-transferase region; sequence EWIVGVLTTS…LPGSVKAIRE (146 aa). The span at 222-244 shows a compositional bias: low complexity; it reads NQNNQNNNNNNNNNNNNNNNNNS. 2 disordered regions span residues 222–266 and 344–364; these read NQNN…SSYN and TGEN…NDDD. The span at 245-254 shows a compositional bias: basic residues; it reads HNHHHHHHHS. Residues 260–718 are MPT adenylyltransferase; the sequence is KRGSSYNMTP…KAILIGPINN (459 aa).

The protein in the N-terminal section; belongs to the MoaB/Mog family. This sequence in the C-terminal section; belongs to the MoeA family. In terms of assembly, homotrimer, homodimer and homooligomer. It depends on Mg(2+) as a cofactor.

Its subcellular location is the cell membrane. It localises to the cytoplasm. The protein resides in the cytosol. It is found in the cytoskeleton. The enzyme catalyses molybdopterin + ATP + H(+) = adenylyl-molybdopterin + diphosphate. The catalysed reaction is adenylyl-molybdopterin + molybdate = Mo-molybdopterin + AMP + H(+). It functions in the pathway cofactor biosynthesis; molybdopterin biosynthesis. Functionally, microtubule-associated protein involved in membrane protein-cytoskeleton interactions. In terms of biological role, also has a catalytic activity and catalyzes two steps in the biosynthesis of the molybdenum cofactor. In the first step, molybdopterin is adenylated. Subsequently, molybdate is inserted into adenylated molybdopterin and AMP is released. This Dictyostelium discoideum (Social amoeba) protein is Gephyrin (gphn).